The following is a 708-amino-acid chain: Leukotoxin translocation ATP-binding protein LktB (708 aa).

Positions 1–126 (MEANHQRNDL…ACYQGQLILV (126 aa)) constitute a Peptidase C39 domain. The ABC transmembrane type-1 domain occupies 155-437 (FLETLIVSIF…LAQLWQDFQQ (283 aa)). The next 5 membrane-spanning stretches (helical) occupy residues 159–179 (LIVS…FQVV), 192–212 (LNII…LSGL), 270–290 (ALTS…MWYY), 296–316 (LVIL…SPIL), and 389–409 (VMVI…LSIG). One can recognise an ABC transporter domain in the interval 469–704 (ISFKNIRFRY…SNGLYSYLHQ (236 aa)). 503 to 510 (GRSGSGKS) contacts ATP.

It belongs to the ABC transporter superfamily. Protein-1 exporter (TC 3.A.1.109) family. As to quaternary structure, homodimer.

It localises to the cell inner membrane. The enzyme catalyses ATP + H2O + proteinSide 1 = ADP + phosphate + proteinSide 2.. Functionally, part of the ABC transporter complex LktBD involved in leukotoxin export. Transmembrane domains (TMD) form a pore in the inner membrane and the ATP-binding domain (NBD) is responsible for energy generation. This Mannheimia haemolytica (Pasteurella haemolytica) protein is Leukotoxin translocation ATP-binding protein LktB (lktB).